Here is a 364-residue protein sequence, read N- to C-terminus: tRNA-specific 2-thiouridylase MnmA 2 (364 aa).

Residues 10 to 17 and M36 each bind ATP; that span reads GMSGGVDS. The active-site Nucleophile is the C106. A disulfide bridge connects residues C106 and C204. An ATP-binding site is contributed by G130. The segment at 154–156 is interaction with tRNA; it reads KDQ. C204 functions as the Cysteine persulfide intermediate in the catalytic mechanism. The interaction with tRNA stretch occupies residues 310–311; it reads RY.

Belongs to the MnmA/TRMU family.

Its subcellular location is the cytoplasm. It carries out the reaction S-sulfanyl-L-cysteinyl-[protein] + uridine(34) in tRNA + AH2 + ATP = 2-thiouridine(34) in tRNA + L-cysteinyl-[protein] + A + AMP + diphosphate + H(+). Its function is as follows. Catalyzes the 2-thiolation of uridine at the wobble position (U34) of tRNA, leading to the formation of s(2)U34. The sequence is that of tRNA-specific 2-thiouridylase MnmA 2 from Thermoanaerobacter pseudethanolicus (strain ATCC 33223 / 39E) (Clostridium thermohydrosulfuricum).